A 771-amino-acid chain; its full sequence is Polyribonucleotide nucleotidyltransferase (771 aa).

The Mg(2+) site is built by Asp-487 and Asp-493. A KH domain is found at 554-613 (PRIETMQIDKAKIRDVIGTGGKVIREIVATTGAKVDIDDEGLIKISSSDLDQIEAARKWI). In terms of domain architecture, S1 motif spans 623 to 691 (GKIYDGKVVN…PRGKVRLSMR (69 aa)). A disordered region spans residues 696 to 771 (ETGAELEDTR…QGHVPDFLKD (76 aa)). A compositionally biased stretch (basic and acidic residues) spans 702–771 (EDTRPAREPR…QGHVPDFLKD (70 aa)).

It belongs to the polyribonucleotide nucleotidyltransferase family. Requires Mg(2+) as cofactor.

Its subcellular location is the cytoplasm. The catalysed reaction is RNA(n+1) + phosphate = RNA(n) + a ribonucleoside 5'-diphosphate. Functionally, involved in mRNA degradation. Catalyzes the phosphorolysis of single-stranded polyribonucleotides processively in the 3'- to 5'-direction. This Sphingopyxis alaskensis (strain DSM 13593 / LMG 18877 / RB2256) (Sphingomonas alaskensis) protein is Polyribonucleotide nucleotidyltransferase.